The chain runs to 190 residues: Lipid A acyltransferase PagP (190 aa).

The first 18 residues, 1 to 18 (MKRLISCLTIICALNASA), serve as a signal peptide directing secretion. Active-site residues include His-60, Asp-103, and Ser-104.

The protein belongs to the lipid A palmitoyltransferase family. As to quaternary structure, homodimer.

Its subcellular location is the cell outer membrane. It catalyses the reaction a lipid A + a 1,2-diacyl-sn-glycero-3-phosphocholine = a hepta-acyl lipid A + a 2-acyl-sn-glycero-3-phosphocholine. It carries out the reaction a lipid IVA + a 1,2-diacyl-sn-glycero-3-phosphocholine = a lipid IVB + a 2-acyl-sn-glycero-3-phosphocholine. The enzyme catalyses a lipid IIA + a 1,2-diacyl-sn-glycero-3-phosphocholine = a lipid IIB + a 2-acyl-sn-glycero-3-phosphocholine. Its function is as follows. Transfers a fatty acid residue from the sn-1 position of a phospholipid to the N-linked hydroxyfatty acid chain on the proximal unit of lipid A or its precursors. The chain is Lipid A acyltransferase PagP from Legionella pneumophila subsp. pneumophila (strain Philadelphia 1 / ATCC 33152 / DSM 7513).